The sequence spans 852 residues: Lon protease homolog 2, peroxisomal (852 aa).

Ser2 is subject to N-acetylserine. Positions 13–222 (LPLLLTHEGV…MTIPLLVRQI (210 aa)) constitute a Lon N-terminal domain. 375 to 382 (GPPGVGKT) is an ATP binding site. A Lon proteolytic domain is found at 651–837 (LSQPGVAIGL…DEVLNAAFDG (187 aa)). Catalysis depends on residues Ser743 and Lys786. Positions 850-852 (SKL) match the Microbody targeting signal motif.

This sequence belongs to the peptidase S16 family. As to quaternary structure, interacts with PEX5. Interacts with TYSND1. May interact with enzymes involved in beta-oxidation of fatty acids, including ACOX1/AOX.

The protein resides in the peroxisome matrix. The enzyme catalyses Hydrolysis of proteins in presence of ATP.. In terms of biological role, ATP-dependent serine protease that mediates the selective degradation of misfolded and unassembled polypeptides in the peroxisomal matrix. Necessary for type 2 peroxisome targeting signal (PTS2)-containing protein processing and facilitates peroxisome matrix protein import. May indirectly regulate peroxisomal fatty acid beta-oxidation through degradation of the self-processed forms of TYSND1. The chain is Lon protease homolog 2, peroxisomal from Bos taurus (Bovine).